Consider the following 312-residue polypeptide: Glyoxylate/hydroxypyruvate reductase A (312 aa).

Arginine 227 is a catalytic residue. Histidine 275 functions as the Proton donor in the catalytic mechanism.

This sequence belongs to the D-isomer specific 2-hydroxyacid dehydrogenase family. GhrA subfamily.

The protein resides in the cytoplasm. The catalysed reaction is glycolate + NADP(+) = glyoxylate + NADPH + H(+). The enzyme catalyses (R)-glycerate + NAD(+) = 3-hydroxypyruvate + NADH + H(+). It carries out the reaction (R)-glycerate + NADP(+) = 3-hydroxypyruvate + NADPH + H(+). Functionally, catalyzes the NADPH-dependent reduction of glyoxylate and hydroxypyruvate into glycolate and glycerate, respectively. In Salmonella typhi, this protein is Glyoxylate/hydroxypyruvate reductase A.